The primary structure comprises 278 residues: Orotidine 5'-phosphate decarboxylase (278 aa).

Substrate-binding positions include Asp-40, 62 to 64 (KTH), 93 to 102 (DRKFIDIGNT), Tyr-228, and Arg-246. Residue Lys-95 is the Proton donor of the active site.

Belongs to the OMP decarboxylase family.

The enzyme catalyses orotidine 5'-phosphate + H(+) = UMP + CO2. It participates in pyrimidine metabolism; UMP biosynthesis via de novo pathway; UMP from orotate: step 2/2. This chain is Orotidine 5'-phosphate decarboxylase (PYR1), found in Passalora fulva (Tomato leaf mold).